The primary structure comprises 346 residues: DNA-directed RNA polymerases I and III subunit RPAC1 (346 aa).

Residue Ala2 is modified to N-acetylalanine.

Belongs to the archaeal Rpo3/eukaryotic RPB3 RNA polymerase subunit family. In terms of assembly, component of the RNA polymerase I and RNA polymerase III complexes consisting of at least 13 and 17 subunits, respectively. Pol I complex consists of a ten-subunit catalytic core composed of POLR1A/RPA1, POLR1B/RPA2, POLR1C/RPAC1, POLR1D/RPAC2, POLR1H/RPA12, POLR2E/RPABC1, POLR2F/RPABC2, POLR2H/RPABC3, POLR2K/RPABC4 and POLR2L/RPABC5; a mobile stalk subunit POLR1F/RPA43 protruding from the core and additional subunits homologous to general transcription factors POLR1E/RPA49 and POLR1G/RPA34. Part of Pol I pre-initiation complex (PIC), in which Pol I core assembles with RRN3 and promoter-bound UTBF and SL1/TIF-IB complex. Pol III complex consists of a ten-subunit catalytic core composed of POLR3A/RPC1, POLR3B/RPC2, POLR1C/RPAC1, POLR1D/RPAC2, POLR3K/RPC10, POLR2E/RPABC1, POLR2F/RPABC2, POLR2H/RPABC3, POLR2K/RPABC4 and POLR2L/RPABC5; a mobile stalk composed of two subunits POLR3H/RPC8 and CRCP/RPC9, protruding from the core and functioning primarily in transcription initiation; and additional subunits homologous to general transcription factors of the RNA polymerase II machinery, POLR3C/RPC3-POLR3F/RPC6-POLR3G/RPC7 heterotrimer required for transcription initiation and POLR3D/RPC4-POLR3E/RPC5 heterodimer involved in both transcription initiation and termination.

The protein resides in the nucleus. The protein localises to the cytoplasm. It is found in the cytosol. DNA-dependent RNA polymerase catalyzes the transcription of DNA into RNA using the four ribonucleoside triphosphates as substrates. Common component of RNA polymerases I and III which synthesize ribosomal RNA precursors and short non-coding RNAs including 5S rRNA, snRNAs, tRNAs and miRNAs, respectively. POLR1C/RPAC1 is part of the polymerase core and may function as a clamp element that moves to open and close the cleft. The polypeptide is DNA-directed RNA polymerases I and III subunit RPAC1 (Mus musculus (Mouse)).